Reading from the N-terminus, the 549-residue chain is CTP synthase (549 aa).

An amidoligase domain region spans residues 1–266 (MSAKYIFVTG…DKLALRYLHL (266 aa)). A CTP-binding site is contributed by S14. S14 serves as a coordination point for UTP. ATP is bound by residues 15–20 (SLGKGL) and D72. 2 residues coordinate Mg(2+): D72 and E140. Residues 147 to 149 (DIE), 187 to 192 (KTKPTQ), and K223 each bind CTP. UTP contacts are provided by residues 187–192 (KTKPTQ) and K223. 239–241 (KDV) contacts ATP. The Glutamine amidotransferase type-1 domain occupies 291-533 (SIGIVGKYVE…VKAAYQNHKP (243 aa)). G353 is an L-glutamine binding site. The active-site Nucleophile; for glutamine hydrolysis is the C380. L-glutamine contacts are provided by residues 381-384 (LGMQ), E404, and R461. Active-site residues include H506 and E508.

Belongs to the CTP synthase family. As to quaternary structure, homotetramer.

The catalysed reaction is UTP + L-glutamine + ATP + H2O = CTP + L-glutamate + ADP + phosphate + 2 H(+). It catalyses the reaction L-glutamine + H2O = L-glutamate + NH4(+). It carries out the reaction UTP + NH4(+) + ATP = CTP + ADP + phosphate + 2 H(+). The protein operates within pyrimidine metabolism; CTP biosynthesis via de novo pathway; CTP from UDP: step 2/2. Allosterically activated by GTP, when glutamine is the substrate; GTP has no effect on the reaction when ammonia is the substrate. The allosteric effector GTP functions by stabilizing the protein conformation that binds the tetrahedral intermediate(s) formed during glutamine hydrolysis. Inhibited by the product CTP, via allosteric rather than competitive inhibition. In terms of biological role, catalyzes the ATP-dependent amination of UTP to CTP with either L-glutamine or ammonia as the source of nitrogen. Regulates intracellular CTP levels through interactions with the four ribonucleotide triphosphates. The polypeptide is CTP synthase (Acidobacterium capsulatum (strain ATCC 51196 / DSM 11244 / BCRC 80197 / JCM 7670 / NBRC 15755 / NCIMB 13165 / 161)).